The chain runs to 500 residues: NAD(P)H-quinone oxidoreductase chain 4, chloroplastic (500 aa).

14 helical membrane-spanning segments follow: residues Phe-4–Leu-24, Ile-37–Leu-57, Gly-84–Ala-104, Ser-111–Phe-129, Leu-134–Met-154, Phe-167–Leu-187, Ala-208–Ile-228, His-242–Val-262, Ala-272–Ala-292, Ile-305–Asp-325, Gly-330–Gly-350, Ile-374–Ala-396, Phe-411–Ile-431, and Leu-462–Val-482.

Belongs to the complex I subunit 4 family.

It is found in the plastid. The protein resides in the chloroplast thylakoid membrane. It carries out the reaction a plastoquinone + NADH + (n+1) H(+)(in) = a plastoquinol + NAD(+) + n H(+)(out). The catalysed reaction is a plastoquinone + NADPH + (n+1) H(+)(in) = a plastoquinol + NADP(+) + n H(+)(out). This is NAD(P)H-quinone oxidoreductase chain 4, chloroplastic from Chloranthus spicatus (Chulantree).